Consider the following 763-residue polypeptide: ATP-dependent RNA helicase SUPV3L1, mitochondrial (763 aa).

A mitochondrion-targeting transit peptide spans 1–65 (MSVNRCIYLL…RPLDTSLFIP (65 aa)). The interval 39–58 (RRTFDKLSTRHSSSGSSRPL) is disordered. In terms of domain architecture, Helicase ATP-binding spans 192 to 332 (EARAIQRKIV…AVDFITELMF (141 aa)). 205–212 (GPTNSGKT) serves as a coordination point for ATP. The region spanning 354-519 (HAVESLDNLK…PTAEQIEMFA (166 aa)) is the Helicase C-terminal domain. 2 disordered regions span residues 679 to 721 (DSQP…KSSL) and 742 to 763 (EWAR…RKKK). The segment covering 680 to 697 (SQPTDTESNSSSTVPESE) has biased composition (polar residues).

Belongs to the helicase family. It depends on Mg(2+) as a cofactor. Requires Mn(2+) as cofactor.

It is found in the nucleus. It localises to the mitochondrion matrix. The protein resides in the mitochondrion nucleoid. The enzyme catalyses ATP + H2O = ADP + phosphate + H(+). Its function is as follows. Major helicase player in mitochondrial RNA metabolism. Component of the mitochondrial degradosome (mtEXO) complex, that degrades 3' overhang double-stranded RNA with a 3'-to-5' directionality in an ATP-dependent manner. ATPase and ATP-dependent multisubstrate helicase, able to unwind double-stranded (ds) DNA and RNA, and RNA/DNA heteroduplexes in the 5'-to-3' direction. Plays a role in the RNA surveillance system in mitochondria; regulates the stability of mature mRNAs, the removal of aberrantly formed mRNAs and the rapid degradation of non coding processing intermediates. Also implicated in recombination and chromatin maintenance pathways. May protect cells from apoptosis. Associates with mitochondrial DNA. The chain is ATP-dependent RNA helicase SUPV3L1, mitochondrial (supv3l1) from Danio rerio (Zebrafish).